The sequence spans 189 residues: Large ribosomal subunit protein uL10 (189 aa).

Belongs to the universal ribosomal protein uL10 family. Part of the ribosomal stalk of the 50S ribosomal subunit. The N-terminus interacts with L11 and the large rRNA to form the base of the stalk. The C-terminus forms an elongated spine to which L12 dimers bind in a sequential fashion forming a multimeric L10(L12)X complex.

Its function is as follows. Forms part of the ribosomal stalk, playing a central role in the interaction of the ribosome with GTP-bound translation factors. The protein is Large ribosomal subunit protein uL10 of Rippkaea orientalis (strain PCC 8801 / RF-1) (Cyanothece sp. (strain PCC 8801)).